A 458-amino-acid chain; its full sequence is 5-hydroxytryptamine receptor 2C (458 aa).

Residues methionine 1 to alanine 32 form the signal peptide. Over leucine 33–tryptophan 55 the chain is Extracellular. The chain crosses the membrane as a helical span at residues proline 56–leucine 80. Residues glutamate 81 to asparagine 86 lie on the Cytoplasmic side of the membrane. A helical transmembrane segment spans residues alanine 87–leucine 111. Topologically, residues leucine 112–proline 128 are extracellular. Cysteine 127 and cysteine 207 are disulfide-bonded. A helical membrane pass occupies residues valine 129–aspartate 151. Threonine 139 contacts ergotamine. A DRY motif; important for ligand-induced conformation changes motif is present at residues aspartate 151–tyrosine 153. The Cytoplasmic portion of the chain corresponds to arginine 152–serine 167. Residues arginine 168–isoleucine 189 form a helical membrane-spanning segment. Residues proline 190–asparagine 213 lie on the Extracellular side of the membrane. N-linked (GlcNAc...) asparagine glycosylation is found at asparagine 203 and asparagine 204. Leucine 209 contributes to the ergotamine binding site. The chain crosses the membrane as a helical span at residues phenylalanine 214–leucine 236. Over threonine 237–lysine 311 the chain is Cytoplasmic. Residues threonine 272–glutamine 301 form a disordered region. Basic residues predominate over residues arginine 287–arginine 297. Residues valine 312–leucine 336 form a helical membrane-spanning segment. The cysteines at positions 337 and 341 are disulfide-linked. Residues cysteine 337–glutamate 347 lie on the Extracellular side of the membrane. The chain crosses the membrane as a helical span at residues lysine 348 to leucine 370. An NPxxY motif; important for ligand-induced conformation changes and signaling motif is present at residues asparagine 364–tyrosine 368. Residues phenylalanine 371–valine 458 are Cytoplasmic-facing. The short motif at serine 456–valine 458 is the PDZ-binding element.

Belongs to the G-protein coupled receptor 1 family. Interacts with MPDZ. Interacts with ARRB2. Interacts with MPP3; this interaction stabilizes the receptor at the plasma membrane and prevents the desensitization of the HTR2C receptor-mediated calcium response.

It localises to the cell membrane. In terms of biological role, G-protein coupled receptor for 5-hydroxytryptamine (serotonin). Also functions as a receptor for various drugs and psychoactive substances, including ergot alkaloid derivatives, 1-2,5,-dimethoxy-4-iodophenyl-2-aminopropane (DOI) and lysergic acid diethylamide (LSD). Ligand binding causes a conformation change that triggers signaling via guanine nucleotide-binding proteins (G proteins) and modulates the activity of downstream effectors. HTR2C is coupled to G(q)/G(11) G alpha proteins and activates phospholipase C-beta, releasing diacylglycerol (DAG) and inositol 1,4,5-trisphosphate (IP3) second messengers that modulate the activity of phosphatidylinositol 3-kinase and promote the release of Ca(2+) ions from intracellular stores, respectively. Beta-arrestin family members inhibit signaling via G proteins and mediate activation of alternative signaling pathways. Regulates neuronal activity via the activation of short transient receptor potential calcium channels in the brain, and thereby modulates the activation of pro-opiomelanocortin neurons and the release of CRH that then regulates the release of corticosterone. Plays a role in the regulation of appetite and eating behavior, responses to anxiogenic stimuli and stress. Plays a role in insulin sensitivity and glucose homeostasis. The polypeptide is 5-hydroxytryptamine receptor 2C (Canis lupus familiaris (Dog)).